We begin with the raw amino-acid sequence, 323 residues long: uncharacterized protein (323 aa).

Helical transmembrane passes span Phe8–Glu28, Leu32–Leu52, and Ile92–Phe112.

It is found in the mitochondrion membrane. This is an uncharacterized protein from Neurospora crassa (strain ATCC 24698 / 74-OR23-1A / CBS 708.71 / DSM 1257 / FGSC 987).